The following is a 225-amino-acid chain: NAD(P)H-quinone oxidoreductase subunit K, chloroplastic (225 aa).

4 residues coordinate [4Fe-4S] cluster: Cys-43, Cys-44, Cys-108, and Cys-139.

The protein belongs to the complex I 20 kDa subunit family. NDH is composed of at least 16 different subunits, 5 of which are encoded in the nucleus. It depends on [4Fe-4S] cluster as a cofactor.

It localises to the plastid. Its subcellular location is the chloroplast thylakoid membrane. It catalyses the reaction a plastoquinone + NADH + (n+1) H(+)(in) = a plastoquinol + NAD(+) + n H(+)(out). The enzyme catalyses a plastoquinone + NADPH + (n+1) H(+)(in) = a plastoquinol + NADP(+) + n H(+)(out). In terms of biological role, NDH shuttles electrons from NAD(P)H:plastoquinone, via FMN and iron-sulfur (Fe-S) centers, to quinones in the photosynthetic chain and possibly in a chloroplast respiratory chain. The immediate electron acceptor for the enzyme in this species is believed to be plastoquinone. Couples the redox reaction to proton translocation, and thus conserves the redox energy in a proton gradient. This chain is NAD(P)H-quinone oxidoreductase subunit K, chloroplastic, found in Oenothera argillicola (Appalachian evening primrose).